A 184-amino-acid polypeptide reads, in one-letter code: Oocyte-secreted protein 4A (184 aa).

The N-terminal stretch at 1–19 (MKISCVLGKLLMLFELIHG) is a signal peptide. N-linked (GlcNAc...) asparagine glycosylation is present at asparagine 128.

It belongs to the PLAC1 family.

The protein localises to the secreted. The protein is Oocyte-secreted protein 4A of Homo sapiens (Human).